The sequence spans 208 residues: Uracil phosphoribosyltransferase (208 aa).

Residues arginine 78, arginine 103, and 130 to 138 (DPMLATANS) each bind 5-phospho-alpha-D-ribose 1-diphosphate. Residues isoleucine 193 and 198-200 (GDA) each bind uracil. Aspartate 199 contributes to the 5-phospho-alpha-D-ribose 1-diphosphate binding site.

Belongs to the UPRTase family. It depends on Mg(2+) as a cofactor.

The catalysed reaction is UMP + diphosphate = 5-phospho-alpha-D-ribose 1-diphosphate + uracil. It functions in the pathway pyrimidine metabolism; UMP biosynthesis via salvage pathway; UMP from uracil: step 1/1. Its activity is regulated as follows. Allosterically activated by GTP. Catalyzes the conversion of uracil and 5-phospho-alpha-D-ribose 1-diphosphate (PRPP) to UMP and diphosphate. The polypeptide is Uracil phosphoribosyltransferase (Brucella melitensis biotype 2 (strain ATCC 23457)).